A 36-amino-acid polypeptide reads, in one-letter code: uncharacterized protein (36 aa).

Its subcellular location is the mitochondrion. This is an uncharacterized protein from Saccharomyces cerevisiae (strain ATCC 204508 / S288c) (Baker's yeast).